Here is a 598-residue protein sequence, read N- to C-terminus: Aspartate--tRNA(Asp/Asn) ligase (598 aa).

Position 174 (Glu174) interacts with L-aspartate. The segment at 198 to 201 is aspartate; that stretch reads QQLK. Arg220 contacts L-aspartate. Residues 220–222 and Gln229 each bind ATP; that span reads RDE. His458 contributes to the L-aspartate binding site. Glu492 lines the ATP pocket. Arg499 is a binding site for L-aspartate. Residue 544–547 participates in ATP binding; the sequence is GIDR.

This sequence belongs to the class-II aminoacyl-tRNA synthetase family. Type 1 subfamily. In terms of assembly, homodimer.

It localises to the cytoplasm. The enzyme catalyses tRNA(Asx) + L-aspartate + ATP = L-aspartyl-tRNA(Asx) + AMP + diphosphate. In terms of biological role, aspartyl-tRNA synthetase with relaxed tRNA specificity since it is able to aspartylate not only its cognate tRNA(Asp) but also tRNA(Asn). Reaction proceeds in two steps: L-aspartate is first activated by ATP to form Asp-AMP and then transferred to the acceptor end of tRNA(Asp/Asn). The protein is Aspartate--tRNA(Asp/Asn) ligase of Dehalococcoides mccartyi (strain CBDB1).